We begin with the raw amino-acid sequence, 366 residues long: Glutamate 5-kinase (366 aa).

Lys17 is an ATP binding site. Positions 57, 144, and 156 each coordinate substrate. ATP contacts are provided by residues Ser176–Asp177 and Thr216–Lys222. In terms of domain architecture, PUA spans Ser278–Pro356.

Belongs to the glutamate 5-kinase family.

Its subcellular location is the cytoplasm. It carries out the reaction L-glutamate + ATP = L-glutamyl 5-phosphate + ADP. Its pathway is amino-acid biosynthesis; L-proline biosynthesis; L-glutamate 5-semialdehyde from L-glutamate: step 1/2. Catalyzes the transfer of a phosphate group to glutamate to form L-glutamate 5-phosphate. This chain is Glutamate 5-kinase, found in Mycolicibacterium vanbaalenii (strain DSM 7251 / JCM 13017 / BCRC 16820 / KCTC 9966 / NRRL B-24157 / PYR-1) (Mycobacterium vanbaalenii).